The sequence spans 199 residues: Probable NADH dehydrogenase [ubiquinone] iron-sulfur protein 7, mitochondrial (199 aa).

[4Fe-4S] cluster-binding residues include Cys74, Cys75, Cys139, and Cys169.

This sequence belongs to the complex I 20 kDa subunit family. In terms of assembly, complex I is composed of 45 different subunits This is a component of the iron-sulfur (IP) fragment of the enzyme. Requires [4Fe-4S] cluster as cofactor.

The protein resides in the mitochondrion. It carries out the reaction a ubiquinone + NADH + 5 H(+)(in) = a ubiquinol + NAD(+) + 4 H(+)(out). Functionally, core subunit of the mitochondrial membrane respiratory chain NADH dehydrogenase (Complex I) that is believed to belong to the minimal assembly required for catalysis. Complex I functions in the transfer of electrons from NADH to the respiratory chain. The immediate electron acceptor for the enzyme is believed to be ubiquinone. This Caenorhabditis elegans protein is Probable NADH dehydrogenase [ubiquinone] iron-sulfur protein 7, mitochondrial (nduf-7).